The following is a 378-amino-acid chain: Ribosomal RNA large subunit methyltransferase G (378 aa).

This sequence belongs to the methyltransferase superfamily. RlmG family.

The protein resides in the cytoplasm. The enzyme catalyses guanosine(1835) in 23S rRNA + S-adenosyl-L-methionine = N(2)-methylguanosine(1835) in 23S rRNA + S-adenosyl-L-homocysteine + H(+). Its function is as follows. Specifically methylates the guanine in position 1835 (m2G1835) of 23S rRNA. The protein is Ribosomal RNA large subunit methyltransferase G of Escherichia coli O9:H4 (strain HS).